The primary structure comprises 424 residues: Acetyl-CoA acetyltransferase, mitochondrial (424 aa).

The transit peptide at 1–30 directs the protein to the mitochondrion; sequence MAALAVLHGVVRRPLLRGLLQEVRCLGRSY. K63 carries the N6-acetyllysine; alternate modification. An N6-succinyllysine; alternate modification is found at K63. K75 carries the N6-succinyllysine modification. The active-site Acyl-thioester intermediate is the C123. Residues K171, K178, K187, and K199 each carry the N6-acetyllysine; alternate modification. An N6-succinyllysine; alternate mark is found at K171, K178, K187, and K199. S204 is modified (phosphoserine). Y216 provides a ligand contact to CoA. Y216 contributes to the K(+) binding site. N6-acetyllysine; alternate occurs at positions 220 and 227. An N6-succinyllysine; alternate mark is found at K220 and K227. K240 carries the post-translational modification N6-succinyllysine. An N6-acetyllysine; alternate modification is found at K242. An N6-succinyllysine; alternate modification is found at K242. Residues K248 and K254 each carry the N6-acetyllysine modification. CoA is bound by residues 255–257 and K260; that span reads RVD. K260 carries the N6-acetyllysine; alternate modification. Residue K260 is modified to N6-succinyllysine; alternate. 2 positions are modified to N6-succinyllysine: K263 and K265. K270 is subject to N6-acetyllysine. Positions 277, 278, and 280 each coordinate K(+). Residue S281 participates in CoA binding. Position 335 is an N6-acetyllysine (K335). A K(+)-binding site is contributed by V378. C410 serves as the catalytic Proton donor/acceptor.

Belongs to the thiolase-like superfamily. Thiolase family. Homotetramer. Succinylation at Lys-265, adjacent to a coenzyme A binding site. Desuccinylated by SIRT5.

It localises to the mitochondrion. The enzyme catalyses 2 acetyl-CoA = acetoacetyl-CoA + CoA. The catalysed reaction is propanoyl-CoA + acetyl-CoA = 2-methyl-3-oxobutanoyl-CoA + CoA. It functions in the pathway lipid metabolism; fatty acid beta-oxidation. Its activity is regulated as follows. Activated by potassium ions, but not sodium ions. In terms of biological role, this is one of the enzymes that catalyzes the last step of the mitochondrial beta-oxidation pathway, an aerobic process breaking down fatty acids into acetyl-CoA. Using free coenzyme A/CoA, catalyzes the thiolytic cleavage of medium- to long-chain 3-oxoacyl-CoAs into acetyl-CoA and a fatty acyl-CoA shortened by two carbon atoms. The activity of the enzyme is reversible and it can also catalyze the condensation of two acetyl-CoA molecules into acetoacetyl-CoA. Thereby, it plays a major role in ketone body metabolism. The polypeptide is Acetyl-CoA acetyltransferase, mitochondrial (Acat1) (Rattus norvegicus (Rat)).